The sequence spans 387 residues: Cobalt-precorrin-5B C(1)-methyltransferase (387 aa).

Belongs to the CbiD family.

It carries out the reaction Co-precorrin-5B + S-adenosyl-L-methionine = Co-precorrin-6A + S-adenosyl-L-homocysteine. It functions in the pathway cofactor biosynthesis; adenosylcobalamin biosynthesis; cob(II)yrinate a,c-diamide from sirohydrochlorin (anaerobic route): step 6/10. Catalyzes the methylation of C-1 in cobalt-precorrin-5B to form cobalt-precorrin-6A. The polypeptide is Cobalt-precorrin-5B C(1)-methyltransferase (Desulfitobacterium hafniense (strain Y51)).